The following is a 145-amino-acid chain: Basic phospholipase A2 beta-bungarotoxin A-AL1 chain (145 aa).

Residues 1 to 17 (MLIFLWCGAVCVSLLGA) form the signal peptide. A propeptide spanning residues 18–25 (ANIPPHPL) is cleaved from the precursor. 5 disulfide bridges follow: Cys52–Cys144, Cys54–Cys70, Cys76–Cys118, Cys86–Cys111, and Cys104–Cys116. Residues Tyr53, Gly55, and Gly57 each coordinate Ca(2+). His73 is a catalytic residue. The active site involves Asp119.

It belongs to the phospholipase A2 family. Group I subfamily. G49 sub-subfamily. Heterodimer; disulfide-linked. The A chains have phospholipase A2 activity and the B chains show homology with the basic protease inhibitors. The cofactor is Ca(2+). In terms of processing, this enzyme lacks one of the seven disulfide bonds found in similar PLA2 proteins. In terms of tissue distribution, expressed by the venom gland.

It localises to the secreted. The catalysed reaction is a 1,2-diacyl-sn-glycero-3-phosphocholine + H2O = a 1-acyl-sn-glycero-3-phosphocholine + a fatty acid + H(+). Its function is as follows. Snake venom phospholipase A2 (PLA2) that inhibits neuromuscular transmission by blocking acetylcholine release from the nerve termini. PLA2 catalyzes the calcium-dependent hydrolysis of the 2-acyl groups in 3-sn-phosphoglycerides. The protein is Basic phospholipase A2 beta-bungarotoxin A-AL1 chain of Bungarus multicinctus (Many-banded krait).